Consider the following 347-residue polypeptide: NADH-ubiquinone oxidoreductase chain 2 (347 aa).

The next 11 helical transmembrane spans lie at 1–21, 25–45, 60–80, 96–116, 127–147, 149–169, 178–198, 202–222, 239–259, 274–294, and 326–346; these read MNPM…SIVM, HWFL…PVLM, FLTQ…NLMF, MLLT…FWVP, GLIL…QIYP, INTN…GWGG, IMAY…IYNP, LLNL…LIFA, IITI…PLTG, NSVI…FFYM, and MMPL…FILL.

It belongs to the complex I subunit 2 family. As to quaternary structure, core subunit of respiratory chain NADH dehydrogenase (Complex I) which is composed of 45 different subunits. Interacts with TMEM242.

The protein resides in the mitochondrion inner membrane. The enzyme catalyses a ubiquinone + NADH + 5 H(+)(in) = a ubiquinol + NAD(+) + 4 H(+)(out). Functionally, core subunit of the mitochondrial membrane respiratory chain NADH dehydrogenase (Complex I) that is believed to belong to the minimal assembly required for catalysis. Complex I functions in the transfer of electrons from NADH to the respiratory chain. The immediate electron acceptor for the enzyme is believed to be ubiquinone. This Suncus etruscus (Etruscan shrew) protein is NADH-ubiquinone oxidoreductase chain 2.